The chain runs to 161 residues: Nucleotide-binding protein Rfer_2692 (161 aa).

This sequence belongs to the YajQ family.

Its function is as follows. Nucleotide-binding protein. The chain is Nucleotide-binding protein Rfer_2692 from Albidiferax ferrireducens (strain ATCC BAA-621 / DSM 15236 / T118) (Rhodoferax ferrireducens).